The chain runs to 336 residues: Methionine import ATP-binding protein MetN (336 aa).

An ABC transporter domain is found at 2–254 (IKIKNLKKYY…PNAKMKEFLG (253 aa)). 34–41 (GHSGAGKS) lines the ATP pocket.

The protein belongs to the ABC transporter superfamily. Methionine importer (TC 3.A.1.24) family. The complex is composed of two ATP-binding proteins (MetN), two transmembrane proteins (MetI) and a solute-binding protein (MetQ).

It localises to the cell inner membrane. It catalyses the reaction L-methionine(out) + ATP + H2O = L-methionine(in) + ADP + phosphate + H(+). It carries out the reaction D-methionine(out) + ATP + H2O = D-methionine(in) + ADP + phosphate + H(+). Its function is as follows. Part of the ABC transporter complex MetNIQ involved in methionine import. Responsible for energy coupling to the transport system. The polypeptide is Methionine import ATP-binding protein MetN (Campylobacter jejuni subsp. jejuni serotype O:2 (strain ATCC 700819 / NCTC 11168)).